The sequence spans 494 residues: Glycerol kinase (494 aa).

Thr13 is an ADP binding site. 3 residues coordinate ATP: Thr13, Thr14, and Ser15. Thr13 provides a ligand contact to sn-glycerol 3-phosphate. Arg17 contributes to the ADP binding site. Sn-glycerol 3-phosphate is bound by residues Arg83, Glu84, Tyr135, and Asp244. Glycerol contacts are provided by Arg83, Glu84, Tyr135, Asp244, and Gln245. 2 residues coordinate ADP: Thr266 and Gly309. Residues Thr266, Gly309, Gln313, and Gly410 each coordinate ATP. The ADP site is built by Gly410 and Asn414.

This sequence belongs to the FGGY kinase family.

The enzyme catalyses glycerol + ATP = sn-glycerol 3-phosphate + ADP + H(+). The protein operates within polyol metabolism; glycerol degradation via glycerol kinase pathway; sn-glycerol 3-phosphate from glycerol: step 1/1. Its activity is regulated as follows. Inhibited by fructose 1,6-bisphosphate (FBP). Functionally, key enzyme in the regulation of glycerol uptake and metabolism. Catalyzes the phosphorylation of glycerol to yield sn-glycerol 3-phosphate. This Shewanella baltica (strain OS195) protein is Glycerol kinase.